Here is a 269-residue protein sequence, read N- to C-terminus: uncharacterized protein (269 aa).

The segment at 1–21 (MAYSSSNSDIEDDSSKSNSNL) is disordered.

This is an uncharacterized protein from Homo sapiens (Human).